Reading from the N-terminus, the 323-residue chain is HPr kinase/phosphorylase (323 aa).

Residues histidine 146 and lysine 167 contribute to the active site. 161-168 (GESGLGKS) serves as a coordination point for ATP. Serine 168 contributes to the Mg(2+) binding site. Catalysis depends on aspartate 185, which acts as the Proton acceptor; for phosphorylation activity. Proton donor; for dephosphorylation activity. The tract at residues 209–218 (LEVRGLGLLD) is important for the catalytic mechanism of both phosphorylation and dephosphorylation. Residue glutamate 210 participates in Mg(2+) binding. Arginine 250 is an active-site residue. The interval 271–276 (QVAAGR) is important for the catalytic mechanism of dephosphorylation.

It belongs to the HPrK/P family. In terms of assembly, homohexamer. It depends on Mg(2+) as a cofactor.

The catalysed reaction is [HPr protein]-L-serine + ATP = [HPr protein]-O-phospho-L-serine + ADP + H(+). It catalyses the reaction [HPr protein]-O-phospho-L-serine + phosphate + H(+) = [HPr protein]-L-serine + diphosphate. Functionally, catalyzes the ATP- as well as the pyrophosphate-dependent phosphorylation of a specific serine residue in HPr, a phosphocarrier protein of the phosphoenolpyruvate-dependent sugar phosphotransferase system (PTS). HprK/P also catalyzes the pyrophosphate-producing, inorganic phosphate-dependent dephosphorylation (phosphorolysis) of seryl-phosphorylated HPr (P-Ser-HPr). The protein is HPr kinase/phosphorylase of Cupriavidus pinatubonensis (strain JMP 134 / LMG 1197) (Cupriavidus necator (strain JMP 134)).